The primary structure comprises 377 residues: Chaperone protein DnaJ (377 aa).

Positions 5–70 (DYYEVLGLQK…QKRAAYDQYG (66 aa)) constitute a J domain. Residues 134–212 (GCKKDIRLST…CHGDGRVQKA (79 aa)) form a CR-type zinc finger. Residues cysteine 147, cysteine 150, cysteine 164, cysteine 167, cysteine 186, cysteine 189, cysteine 200, and cysteine 203 each coordinate Zn(2+). CXXCXGXG motif repeat units lie at residues 147 to 154 (CDNCHGTG), 164 to 171 (CPHCHGAG), 186 to 193 (CPSCHGTG), and 200 to 207 (CHSCHGDG).

The protein belongs to the DnaJ family. As to quaternary structure, homodimer. Zn(2+) is required as a cofactor.

Its subcellular location is the cytoplasm. Participates actively in the response to hyperosmotic and heat shock by preventing the aggregation of stress-denatured proteins and by disaggregating proteins, also in an autonomous, DnaK-independent fashion. Unfolded proteins bind initially to DnaJ; upon interaction with the DnaJ-bound protein, DnaK hydrolyzes its bound ATP, resulting in the formation of a stable complex. GrpE releases ADP from DnaK; ATP binding to DnaK triggers the release of the substrate protein, thus completing the reaction cycle. Several rounds of ATP-dependent interactions between DnaJ, DnaK and GrpE are required for fully efficient folding. Also involved, together with DnaK and GrpE, in the DNA replication of plasmids through activation of initiation proteins. This is Chaperone protein DnaJ from Haemophilus ducreyi (strain 35000HP / ATCC 700724).